Here is a 90-residue protein sequence, read N- to C-terminus: Acylphosphatase (90 aa).

The region spanning 3 to 90 (KKQFIVYGLV…REFTDFSVRY (88 aa)) is the Acylphosphatase-like domain. Catalysis depends on residues R18 and N36.

This sequence belongs to the acylphosphatase family.

It catalyses the reaction an acyl phosphate + H2O = a carboxylate + phosphate + H(+). The chain is Acylphosphatase (acyP) from Pasteurella multocida (strain Pm70).